The chain runs to 412 residues: Zinc finger protein 260 (412 aa).

13 C2H2-type zinc fingers span residues 27–49 (YECN…KKMH), 55–77 (HECT…LRSH), 83–105 (YKCN…QKHH), 136–158 (YACK…EKIH), 164–186 (FECN…QNIH), 192–214 (FKCS…QRIH), 220–242 (YECK…QRSH), 248–270 (YTCK…EKIH), 276–298 (YKCN…HNIH), 304–326 (YECN…VRIH), 332–354 (YECK…MRSH), 360–382 (YGCN…MRIH), and 388–412 (YQCS…IHTH).

This sequence belongs to the krueppel C2H2-type zinc-finger protein family. Binds DNA. Interacts with GATA4.

It localises to the nucleus. In terms of biological role, transcription factor that acts as a cardiac regulator and an effector of alpha1-adrenergic signaling. Binds to PE response elements (PERE) present in the promoter of genes such as ANF/NPPA and acts as a direct transcriptional activator of NPPA. Also acts as a cofactor with GATA4, a key cardiac regulator. This is Zinc finger protein 260 (ZNF260) from Homo sapiens (Human).